A 256-amino-acid polypeptide reads, in one-letter code: Acetyl-coenzyme A carboxylase carboxyl transferase subunit alpha (256 aa).

In terms of domain architecture, CoA carboxyltransferase C-terminal spans 1–236; it reads MTDVARILKE…KEHLKTEINQ (236 aa).

This sequence belongs to the AccA family. As to quaternary structure, acetyl-CoA carboxylase is a heterohexamer composed of biotin carboxyl carrier protein (AccB), biotin carboxylase (AccC) and two subunits each of ACCase subunit alpha (AccA) and ACCase subunit beta (AccD).

It is found in the cytoplasm. It carries out the reaction N(6)-carboxybiotinyl-L-lysyl-[protein] + acetyl-CoA = N(6)-biotinyl-L-lysyl-[protein] + malonyl-CoA. It functions in the pathway lipid metabolism; malonyl-CoA biosynthesis; malonyl-CoA from acetyl-CoA: step 1/1. In terms of biological role, component of the acetyl coenzyme A carboxylase (ACC) complex. First, biotin carboxylase catalyzes the carboxylation of biotin on its carrier protein (BCCP) and then the CO(2) group is transferred by the carboxyltransferase to acetyl-CoA to form malonyl-CoA. In Streptococcus uberis (strain ATCC BAA-854 / 0140J), this protein is Acetyl-coenzyme A carboxylase carboxyl transferase subunit alpha.